The following is an 89-amino-acid chain: UPF0297 protein SUB1776 (89 aa).

This sequence belongs to the UPF0297 family.

In Streptococcus uberis (strain ATCC BAA-854 / 0140J), this protein is UPF0297 protein SUB1776.